Reading from the N-terminus, the 161-residue chain is MAQISDSLDVAPESFSTETPNEEAPKAPRAVLNVSGGAVGRRKQAIARVRLVPGSGSITVNGREFADYFPNKLHQQLVNDPFKVLDLLGSYDVVARISGGGPSGQAGALRLGIARALNEIDEENNRAVLKKNGFLSRDARVKERKKAGLKKARKAPQFSKR.

Disordered stretches follow at residues 1-27 and 142-161; these read MAQI…APKA and KERK…FSKR.

It belongs to the universal ribosomal protein uS9 family.

The sequence is that of Small ribosomal subunit protein uS9 from Clavibacter michiganensis subsp. michiganensis (strain NCPPB 382).